The following is a 694-amino-acid chain: Junctophilin-2 (694 aa).

At 1 to 672 (MSGGRFDFDD…EVEVEEVPNT (672 aa)) the chain is on the cytoplasmic side. 6 MORN repeats span residues 14–36 (YCGG…KGQG), 38–59 (YSGS…SGNT), 60–79 (FEGY…TKGR), 82–104 (YKGE…SSGA), 106–128 (YEGT…DGGT), and 129–151 (YQGQ…PYGM). 2 positions are modified to phosphoserine: Ser-162 and Ser-165. Disordered regions lie at residues 164-192 (SSLR…ALPS) and 231-278 (RAES…AAPF). Residues 176–189 (APDSPASPAADGPA) show a composition bias toward low complexity. Over residues 235–244 (RTSVGSQRSR) the composition is skewed to polar residues. Positions 250–267 (SDLSSGASDAASTASLGE) are enriched in low complexity. MORN repeat units lie at residues 290–312 (YMGE…SGLR) and 313–335 (YEGE…DGHR). A Bipartite nuclear localization signal motif is present at residues 350–364 (KRRVLPLKSNKVRQK). A phosphoserine mark is found at Ser-445, Ser-447, and Ser-466. The disordered stretch occupies residues 448-663 (LLEPPDRGAA…KEAAQAAEAE (216 aa)). A compositionally biased stretch (basic and acidic residues) spans 467 to 476 (PQLHERETPR). Position 474 is a phosphothreonine (Thr-474). Residues 478–491 (EGGPPSPAGTPPQP) show a composition bias toward pro residues. A Phosphoserine modification is found at Ser-483. The residue at position 487 (Thr-487) is a Phosphothreonine. Positions 492-496 (KRPRP) match the Nuclear localization signal motif. The segment covering 522 to 540 (SRPATPAAAGAGRRSPARP) has biased composition (low complexity). Ser-536, Ser-542, Ser-596, and Ser-600 each carry phosphoserine. Residues 589 to 610 (PEAADPDSAPASPATAPGQAPA) are compositionally biased toward low complexity. The chain crosses the membrane as a helical; Anchor for type IV membrane protein span at residues 673–693 (VLICMVILLNIGLAILFVHLL).

This sequence belongs to the junctophilin family. As to quaternary structure, interacts with TRPC3. Interacts with BAG5 and HSPA8; the interaction with HSPA8 is increased in the presence of BAG5. Junctophilin-2 N-terminal fragment: Interacts with MEF2C. In terms of processing, proteolytically cleaved by calpain in response to cardiac stress. The major cleavage site takes place at the C-terminus and leads to the release of the Junctophilin-2 N-terminal fragment chain (JP2NT). Post-translationally, phosphorylation on Ser-165, probably by PKC, affects RYR1-mediated calcium ion release, interaction with TRPC3, and skeletal muscle myotubule development.

Its subcellular location is the cell membrane. The protein resides in the sarcoplasmic reticulum membrane. It localises to the endoplasmic reticulum membrane. It is found in the nucleus. Functionally, membrane-binding protein that provides a structural bridge between the plasma membrane and the sarcoplasmic reticulum and is required for normal excitation-contraction coupling in cardiomyocytes. Provides a structural foundation for functional cross-talk between the cell surface and intracellular Ca(2+) release channels by maintaining the 12-15 nm gap between the sarcolemma and the sarcoplasmic reticulum membranes in the cardiac dyads. Necessary for proper intracellular Ca(2+) signaling in cardiac myocytes via its involvement in ryanodine receptor-mediated calcium ion release. Contributes to the construction of skeletal muscle triad junctions. Its function is as follows. Transcription repressor required to safeguard against the deleterious effects of cardiac stress. Generated following cleavage of the Junctophilin-2 chain by calpain in response to cardiac stress in cardiomyocytes. Following cleavage and release from the membrane, translocates to the nucleus, binds DNA and represses expression of genes implicated in cell growth and differentiation, hypertrophy, inflammation and fibrosis. Modifies the transcription profile and thereby attenuates pathological remodeling in response to cardiac stress. Probably acts by competing with MEF2 transcription factors and TATA-binding proteins. In Oryctolagus cuniculus (Rabbit), this protein is Junctophilin-2 (JPH2).